The chain runs to 99 residues: Aspartyl/glutamyl-tRNA(Asn/Gln) amidotransferase subunit C (99 aa).

It belongs to the GatC family. Heterotrimer of A, B and C subunits.

The enzyme catalyses L-glutamyl-tRNA(Gln) + L-glutamine + ATP + H2O = L-glutaminyl-tRNA(Gln) + L-glutamate + ADP + phosphate + H(+). The catalysed reaction is L-aspartyl-tRNA(Asn) + L-glutamine + ATP + H2O = L-asparaginyl-tRNA(Asn) + L-glutamate + ADP + phosphate + 2 H(+). Its function is as follows. Allows the formation of correctly charged Asn-tRNA(Asn) or Gln-tRNA(Gln) through the transamidation of misacylated Asp-tRNA(Asn) or Glu-tRNA(Gln) in organisms which lack either or both of asparaginyl-tRNA or glutaminyl-tRNA synthetases. The reaction takes place in the presence of glutamine and ATP through an activated phospho-Asp-tRNA(Asn) or phospho-Glu-tRNA(Gln). The protein is Aspartyl/glutamyl-tRNA(Asn/Gln) amidotransferase subunit C of Paracidovorax citrulli (strain AAC00-1) (Acidovorax citrulli).